Here is a 385-residue protein sequence, read N- to C-terminus: Protein delta homolog 1 (385 aa).

The N-terminal stretch at 1–23 (MIATGALLRVLLLLLAFGHSTYG) is a signal peptide. EGF-like domains lie at 24-55 (AECD…PLCD), 53-86 (LCDK…KFCE), 88-125 (DVRA…KDCQ), 127-168 (KAGP…NFCE), 172-208 (ATNS…KTCS), and 210-247 (PVSN…PTCA). At 24–305 (AECDPPCDPQ…KSTPLLTEGQ (282 aa)) the chain is on the extracellular side. Disulfide bonds link Cys26/Cys37, Cys30/Cys43, Cys45/Cys54, Cys57/Cys68, Cys63/Cys74, Cys76/Cys85, Cys92/Cys103, Cys97/Cys113, Cys115/Cys124, Cys131/Cys144, Cys138/Cys156, and Cys158/Cys167. O-linked (GalNAc...) serine glycosylation occurs at Ser94. An N-linked (GlcNAc...) asparagine glycan is attached at Asn100. A glycan (N-linked (GlcNAc...) asparagine; atypical; partial) is linked at Asn165. The N-linked (GlcNAc...) asparagine; atypical glycan is linked to Asn174. Cystine bridges form between Cys176–Cys187, Cys181–Cys196, Cys198–Cys207, Cys214–Cys225, Cys219–Cys235, and Cys237–Cys246. Residue Ser216 is glycosylated (O-linked (GalNAc...) serine). Residue Thr224 is glycosylated (O-linked (GalNAc...) threonine). Thr258 carries an O-linked (GalNAc...) threonine glycan. An O-linked (GalNAc...) threonine; partial glycan is attached at Thr267. Thr271 is a glycosylation site (O-linked (GalNAc...) threonine). Asn295 carries N-linked (GlcNAc...) asparagine glycosylation. The helical transmembrane segment at 306-329 (AICFTILGVLTSLVVLGTVAIVFL) threads the bilayer. Residues 330-385 (NKCETWVSNLRYNHTFRKKKNLLLQYNSGEELAVNIIFPEKIDMTTFNKEAGDEEI) are Cytoplasmic-facing.

Monomer. Interacts with SH3RF2. N- and O-glycosylated. In terms of tissue distribution, highly expressed in fetal liver, placenta, adult adrenal gland, brain, testis and ovary and, to a lesser degree, in adult kidney, muscle, thymus and heart.

It localises to the membrane. It is found in the cytoplasm. Its function is as follows. May have a role in neuroendocrine differentiation. Inhibits adipocyte differentiation. In Mus musculus (Mouse), this protein is Protein delta homolog 1 (Dlk1).